A 489-amino-acid polypeptide reads, in one-letter code: 5'-AMP-activated protein kinase subunit gamma-3 (489 aa).

The segment at 1 to 95 (MEPELEHTLP…TRQEATFPKA (95 aa)) is disordered. Over residues 32-47 (GENSWPSPAVATSSER) the composition is skewed to polar residues. CBS domains lie at 197 to 258 (MATS…RSPL), 280 to 340 (CFKP…LLPR), and 355 to 415 (TFRD…HLDM). Residues arginine 225, 240–245 (MLTITD), valine 285, 306–307 (HR), and lysine 325 each bind ADP. AMP-binding positions include arginine 225, 240–245 (MLTITD), valine 285, histidine 306, 306–307 (HR), lysine 325, threonine 355, alanine 360, 381–382 (SA), 397–400 (SRFD), arginine 424, leucine 432, histidine 453, 453–454 (HR), and 469–472 (SLSD). ATP-binding positions include arginine 225, 240 to 245 (MLTITD), valine 285, 306 to 307 (HR), arginine 307, and lysine 325. Positions 293 to 314 (LFEAVYALIKNRIHRLPVLDPV) match the AMPK pseudosubstrate motif. Residues 397 to 400 (SRFD), arginine 424, leucine 432, and 453 to 454 (HR) contribute to the ADP site. ATP contacts are provided by residues 397–400 (SRFD), arginine 424, leucine 432, and 453–454 (HR). The CBS 4 domain occupies 427–486 (CLEGVLSCQPHESLGEVIDRIAREQVHRLVLVDETQHLLGVVSLSDILQALVLSPAGIDA).

This sequence belongs to the 5'-AMP-activated protein kinase gamma subunit family. AMPK is a heterotrimer of an alpha catalytic subunit (PRKAA1 or PRKAA2), a beta (PRKAB1 or PRKAB2) and a gamma non-catalytic subunits (PRKAG1, PRKAG2 or PRKAG3). Interacts with FNIP1 and FNIP2. Phosphorylated by ULK1; leading to negatively regulate AMPK activity and suggesting the existence of a regulatory feedback loop between ULK1 and AMPK. In terms of processing, glycosylated; O-GlcNAcylated by OGT, promoting the AMP-activated protein kinase (AMPK) activity.

Functionally, AMP/ATP-binding subunit of AMP-activated protein kinase (AMPK), an energy sensor protein kinase that plays a key role in regulating cellular energy metabolism. In response to reduction of intracellular ATP levels, AMPK activates energy-producing pathways and inhibits energy-consuming processes: inhibits protein, carbohydrate and lipid biosynthesis, as well as cell growth and proliferation. AMPK acts via direct phosphorylation of metabolic enzymes, and by longer-term effects via phosphorylation of transcription regulators. AMPK also acts as a regulator of cellular polarity by remodeling the actin cytoskeleton; probably by indirectly activating myosin. The AMPK gamma3 subunit is a non-catalytic subunit with a regulatory role in muscle energy metabolism. It mediates binding to AMP, ADP and ATP, leading to AMPK activation or inhibition: AMP-binding results in allosteric activation of alpha catalytic subunit (PRKAA1 or PRKAA2) both by inducing phosphorylation and preventing dephosphorylation of catalytic subunits. ADP also stimulates phosphorylation, without stimulating already phosphorylated catalytic subunit. ATP promotes dephosphorylation of catalytic subunit, rendering the AMPK enzyme inactive. The sequence is that of 5'-AMP-activated protein kinase subunit gamma-3 (Prkag3) from Mus musculus (Mouse).